The primary structure comprises 484 residues: Ureidoglycolate hydrolase (484 aa).

The signal sequence occupies residues 1 to 28 (MATSAAARFLAALAGAAVLLVLLGGAAG). His148, Asp159, Glu194, and His262 together coordinate Mn(2+). 2 substrate regions span residues 193–194 (EE) and 262–265 (HIEQ). The segment at 284 to 399 (APASIKVEFE…LSEFKIINQD (116 aa)) is involved in dimerization. Substrate is bound by residues His298, Asn348, and Arg361. Positions 431-432 (YH) are substrate. Position 456 (His456) interacts with Mn(2+). Position 456 (His456) interacts with substrate.

It belongs to the peptidase M20 family. In terms of assembly, homodimer. The cofactor is Mn(2+). Requires Ni(2+) as cofactor. Co(2+) serves as cofactor.

The protein localises to the endoplasmic reticulum. It carries out the reaction (S)-ureidoglycolate + H2O + 2 H(+) = glyoxylate + 2 NH4(+) + CO2. It functions in the pathway nitrogen metabolism; (S)-allantoin degradation; glyoxylate from (S)-ureidoglycolate: step 1/1. Its function is as follows. Involved in the catabolism of purine nucleotides. The sequential activity of AAH, UGLYAH and UAH allows a complete purine breakdown without the intermediate generation of urea. This is Ureidoglycolate hydrolase from Oryza sativa subsp. japonica (Rice).